Here is a 140-residue protein sequence, read N- to C-terminus: MANRTIVAFDFGTKSIGVAIGQEVTGTARALTSFKAQDGTPDWQKVEKLLKEWQPDLVVVGLPLNMDGTEQPLTARARRFANRLHGRFGVQIALQDERLSTVEARANLFDSGGYRALDKGSVDAASAVIILESWFDEQAG.

Belongs to the YqgF nuclease family.

Its subcellular location is the cytoplasm. Its function is as follows. Could be a nuclease involved in processing of the 5'-end of pre-16S rRNA. This is Putative pre-16S rRNA nuclease from Yersinia enterocolitica serotype O:8 / biotype 1B (strain NCTC 13174 / 8081).